A 1048-amino-acid chain; its full sequence is Putative cation efflux system protein SilA (1048 aa).

14 helical membrane-spanning segments follow: residues 14 to 34 (FLVM…IINT), 125 to 145 (VSSE…YALV), 338 to 358 (LSSK…LFLW), 363 to 383 (ALVA…VMHF), 391 to 411 (MSLG…IVMI), 446 to 466 (VGPA…PIFT), 485 to 505 (SMAG…GFWI), 539 to 559 (TLLV…QVGG), 737 to 757 (GMTV…AMVG), 871 to 891 (KLKL…YLAF), 897 to 917 (ALLI…FLYW), 928 to 948 (TGFI…LMYL), 985 to 1005 (AMTV…TGAG), and 1012 to 1032 (IAAP…FIIP).

This sequence belongs to the resistance-nodulation-cell division (RND) (TC 2.A.6) family.

The protein resides in the cell inner membrane. In terms of biological role, component of the sil cation-efflux system that confers resistance to silver. May be part of a three-component cation/proton antiporter. The chain is Putative cation efflux system protein SilA (silA) from Salmonella typhimurium.